The sequence spans 858 residues: G2-specific protein kinase nim-1 (858 aa).

One can recognise a Protein kinase domain in the interval 7 to 290; it reads YELLEKIGHG…TATLLNLPIV (284 aa). ATP-binding positions include 13–21 and K36; that span reads IGHGSFGII. Residue D161 is the Proton acceptor of the active site. T194 carries the phosphothreonine; by autocatalysis modification. Positions 291 to 383 form a coiled coil; the sequence is RLMRKEKEVV…QARVEAELQR (93 aa). Disordered regions lie at residues 495-693 and 747-858; these read TKAP…LPQA and SAVD…LSQS. A compositionally biased stretch (basic and acidic residues) spans 516 to 525; sequence SNWEVPRETE. Residues 526–535 show a composition bias toward acidic residues; that stretch reads MIDSGDESEA. Composition is skewed to polar residues over residues 548–572 and 580–598; these read SSKN…NSNV and SKQT…SSIG. The span at 636-648 shows a compositional bias: low complexity; sequence SANNINNSSNGGS. Positions 650 to 661 are enriched in polar residues; the sequence is APSSTVTSNITV. The segment covering 676–691 has biased composition (low complexity); the sequence is SSFSQQQNNQPQQSLP. The segment covering 760–780 has biased composition (polar residues); that stretch reads GQSQLPTRPRSQPQPITANFE. Positions 781 to 802 are enriched in low complexity; sequence QQQQQQQSNTNSISSSNSAGSG.

The protein belongs to the protein kinase superfamily. CAMK Ser/Thr protein kinase family.

It localises to the nucleus. The catalysed reaction is L-seryl-[protein] + ATP = O-phospho-L-seryl-[protein] + ADP + H(+). The enzyme catalyses L-threonyl-[protein] + ATP = O-phospho-L-threonyl-[protein] + ADP + H(+). In terms of biological role, protein kinase that plays an important role in mitotic regulation. This chain is G2-specific protein kinase nim-1 (nim-1), found in Neurospora crassa (strain ATCC 24698 / 74-OR23-1A / CBS 708.71 / DSM 1257 / FGSC 987).